The primary structure comprises 373 residues: 4-hydroxy-3-methylbut-2-en-1-yl diphosphate synthase (flavodoxin) (373 aa).

The [4Fe-4S] cluster site is built by cysteine 270, cysteine 273, cysteine 305, and glutamate 312.

Belongs to the IspG family. [4Fe-4S] cluster is required as a cofactor.

The catalysed reaction is (2E)-4-hydroxy-3-methylbut-2-enyl diphosphate + oxidized [flavodoxin] + H2O + 2 H(+) = 2-C-methyl-D-erythritol 2,4-cyclic diphosphate + reduced [flavodoxin]. Its pathway is isoprenoid biosynthesis; isopentenyl diphosphate biosynthesis via DXP pathway; isopentenyl diphosphate from 1-deoxy-D-xylulose 5-phosphate: step 5/6. Converts 2C-methyl-D-erythritol 2,4-cyclodiphosphate (ME-2,4cPP) into 1-hydroxy-2-methyl-2-(E)-butenyl 4-diphosphate. In Vibrio atlanticus (strain LGP32) (Vibrio splendidus (strain Mel32)), this protein is 4-hydroxy-3-methylbut-2-en-1-yl diphosphate synthase (flavodoxin).